Consider the following 248-residue polypeptide: Ubiquinone biosynthesis O-methyltransferase (248 aa).

Residues Arg-41, Gly-72, Asp-93, and Met-136 each coordinate S-adenosyl-L-methionine.

The protein belongs to the methyltransferase superfamily. UbiG/COQ3 family.

The catalysed reaction is a 3-demethylubiquinol + S-adenosyl-L-methionine = a ubiquinol + S-adenosyl-L-homocysteine + H(+). It catalyses the reaction a 3-(all-trans-polyprenyl)benzene-1,2-diol + S-adenosyl-L-methionine = a 2-methoxy-6-(all-trans-polyprenyl)phenol + S-adenosyl-L-homocysteine + H(+). Its pathway is cofactor biosynthesis; ubiquinone biosynthesis. Its function is as follows. O-methyltransferase that catalyzes the 2 O-methylation steps in the ubiquinone biosynthetic pathway. The sequence is that of Ubiquinone biosynthesis O-methyltransferase from Sinorhizobium fredii (strain NBRC 101917 / NGR234).